Here is a 206-residue protein sequence, read N- to C-terminus: Orotate phosphoribosyltransferase (206 aa).

5-phospho-alpha-D-ribose 1-diphosphate is bound by residues Arg93, Lys97, His99, and 119–127; that span reads EDLISTGGT. An orotate-binding site is contributed by Ser123.

It belongs to the purine/pyrimidine phosphoribosyltransferase family. PyrE subfamily. In terms of assembly, homodimer. Mg(2+) is required as a cofactor.

The enzyme catalyses orotidine 5'-phosphate + diphosphate = orotate + 5-phospho-alpha-D-ribose 1-diphosphate. It functions in the pathway pyrimidine metabolism; UMP biosynthesis via de novo pathway; UMP from orotate: step 1/2. In terms of biological role, catalyzes the transfer of a ribosyl phosphate group from 5-phosphoribose 1-diphosphate to orotate, leading to the formation of orotidine monophosphate (OMP). This Bacillus caldolyticus protein is Orotate phosphoribosyltransferase.